The following is a 717-amino-acid chain: Polyribonucleotide nucleotidyltransferase (717 aa).

Mg(2+)-binding residues include Asp-488 and Asp-494. Residues 555 to 614 (PRIEVMNIPVDKIREVIGSGGKVIREIVEKTGAKINIDDDGTVKIASASAKEIEAARKWI) form the KH domain. Residues 624-692 (GQVYEGTVVK…ERGKVRLSMK (69 aa)) enclose the S1 motif domain.

It belongs to the polyribonucleotide nucleotidyltransferase family. Mg(2+) is required as a cofactor.

It localises to the cytoplasm. The catalysed reaction is RNA(n+1) + phosphate = RNA(n) + a ribonucleoside 5'-diphosphate. Involved in mRNA degradation. Catalyzes the phosphorolysis of single-stranded polyribonucleotides processively in the 3'- to 5'-direction. The polypeptide is Polyribonucleotide nucleotidyltransferase (Rhizobium meliloti (strain 1021) (Ensifer meliloti)).